A 49-amino-acid chain; its full sequence is Large ribosomal subunit protein bL33 (49 aa).

Belongs to the bacterial ribosomal protein bL33 family.

The sequence is that of Large ribosomal subunit protein bL33 from Pseudothermotoga lettingae (strain ATCC BAA-301 / DSM 14385 / NBRC 107922 / TMO) (Thermotoga lettingae).